Consider the following 415-residue polypeptide: Maintenance of mitochondrial morphology protein 1 (415 aa).

The Lumenal segment spans residues 1 to 18 (MADICPSRSEPTLSFTQG). A helical transmembrane segment spans residues 19–39 (LILGQLSVVLLLAAFIKFFIF). The Cytoplasmic portion of the chain corresponds to 40–415 (GDPPSPEVVA…MPGSMPGSMP (376 aa)). The region spanning 114 to 330 (QPESLDWFNV…EPRFQEIALP (217 aa)) is the SMP-LTD domain. Residues 373-389 (IEAEAHGGADRVPDSLR) are compositionally biased toward basic and acidic residues. Residues 373 to 415 (IEAEAHGGADRVPDSLRYRHRPRADEEFPGAGSMPGSMPGSMP) form a disordered region. Over residues 404–415 (GSMPGSMPGSMP) the composition is skewed to low complexity.

Belongs to the MMM1 family. In terms of assembly, homodimer. Component of the ER-mitochondria encounter structure (ERMES) or MDM complex, composed of mmm-1, mdm10, mdm12 and mdm34. A mmm-1 homodimer associates with one molecule of mdm12 on each side in a pairwise head-to-tail manner, and the SMP-LTD domains of mmm-1 and mdm12 generate a continuous hydrophobic tunnel for phospholipid trafficking.

The protein resides in the endoplasmic reticulum membrane. Its function is as follows. Component of the ERMES/MDM complex, which serves as a molecular tether to connect the endoplasmic reticulum (ER) and mitochondria. Components of this complex are involved in the control of mitochondrial shape and protein biogenesis, and function in nonvesicular lipid trafficking between the ER and mitochondria. The mdm12-mmm-1 subcomplex functions in the major beta-barrel assembly pathway that is responsible for biogenesis of all outer membrane beta-barrel proteins, and acts in a late step after the SAM complex. The mdm10-mdm12-mmm-1 subcomplex further acts in the TOM40-specific pathway after the action of the mdm12-mmm-1 complex. Essential for establishing and maintaining the structure of mitochondria and maintenance of mtDNA nucleoids. This Neurospora crassa (strain ATCC 24698 / 74-OR23-1A / CBS 708.71 / DSM 1257 / FGSC 987) protein is Maintenance of mitochondrial morphology protein 1 (mmm-1).